The chain runs to 335 residues: Glycerol-3-phosphate dehydrogenase [NAD(P)+] (335 aa).

NADPH contacts are provided by Ser-10, Phe-11, Arg-31, and Lys-105. Residues Lys-105, Gly-136, and Ser-138 each contribute to the sn-glycerol 3-phosphate site. Ala-140 lines the NADPH pocket. The sn-glycerol 3-phosphate site is built by Lys-191, Asp-244, Ser-254, Arg-255, and Asn-256. Lys-191 acts as the Proton acceptor in catalysis. Residue Arg-255 participates in NADPH binding. Residues Val-279 and Glu-281 each coordinate NADPH.

Belongs to the NAD-dependent glycerol-3-phosphate dehydrogenase family.

The protein localises to the cytoplasm. It catalyses the reaction sn-glycerol 3-phosphate + NAD(+) = dihydroxyacetone phosphate + NADH + H(+). The enzyme catalyses sn-glycerol 3-phosphate + NADP(+) = dihydroxyacetone phosphate + NADPH + H(+). It functions in the pathway membrane lipid metabolism; glycerophospholipid metabolism. Functionally, catalyzes the reduction of the glycolytic intermediate dihydroxyacetone phosphate (DHAP) to sn-glycerol 3-phosphate (G3P), the key precursor for phospholipid synthesis. The polypeptide is Glycerol-3-phosphate dehydrogenase [NAD(P)+] (Leptospira borgpetersenii serovar Hardjo-bovis (strain L550)).